Consider the following 485-residue polypeptide: NADH-quinone oxidoreductase subunit N (485 aa).

14 helical membrane-spanning segments follow: residues 8 to 28 (LIALLPLLIVGLTVVVVMLSI), 35 to 55 (FLNATLSVLGLNAALVSLWFV), 75 to 95 (LYTGLVLLASLATCTFAYPWL), 105 to 125 (FYLLVLIAALGGILLAGANHL), 127 to 147 (ALFLGIELISLPLFGLVGYAF), 159 to 179 (YTILSAAASSFLLFGMALVYA), 203 to 223 (LLAGLGLMIVGLGFKLSLVPF), 235 to 255 (PAPVSTFLATASKIAIFGVVM), 271 to 291 (VVLGLIAFASIIFGNLMALSQ), 297 to 317 (LLGYSSISHLGYLLVALIALQ), 326 to 346 (VGVYLAGYLFSSLGAFGVVSL), 374 to 394 (AVMTVMMLSLAGIPMTLGFIG), 408 to 430 (WWLVAAVVVGSAIGLYYYLRVAV), and 455 to 475 (IVVLISALLVLVLGIWPQPLI).

The protein belongs to the complex I subunit 2 family. NDH-1 is composed of 13 different subunits. Subunits NuoA, H, J, K, L, M, N constitute the membrane sector of the complex.

Its subcellular location is the cell inner membrane. The enzyme catalyses a quinone + NADH + 5 H(+)(in) = a quinol + NAD(+) + 4 H(+)(out). NDH-1 shuttles electrons from NADH, via FMN and iron-sulfur (Fe-S) centers, to quinones in the respiratory chain. The immediate electron acceptor for the enzyme in this species is believed to be ubiquinone. Couples the redox reaction to proton translocation (for every two electrons transferred, four hydrogen ions are translocated across the cytoplasmic membrane), and thus conserves the redox energy in a proton gradient. This is NADH-quinone oxidoreductase subunit N from Klebsiella pneumoniae subsp. pneumoniae (strain ATCC 700721 / MGH 78578).